We begin with the raw amino-acid sequence, 336 residues long: MKIAIVNDMPLAVEALRRALAFEPAHQVVWVASNGAEAVRLCAENTPDLILMDLIMPVMDGVEATRRIMAESPCAIVIVTVDRQQNVHRVFEAMGHGALDVVDTPAIGGGNPQEAAAPLLRKILNIGWLIGEKTARSRPAPAAPRSTASRQRLVAIGSSAGGPAALEVLLKGLPRHFSAAIVLVQHVDQVFAAGMAEWLASASGLDVRLAREGEPPQAGAVLLAGTNHHIRLLKNGTLAYTAEPVNEIYRPSIDVFFESVANYWNGDAVGVLLTGMGRDGAQGLKLMRQQGYLTIAQDQQSSAVYGMPKAAAAIDAAVEIRPLEKIAPRLLEIFPK.

Residues 2–119 enclose the Response regulatory domain; the sequence is KIAIVNDMPL…GNPQEAAAPL (118 aa). Asp53 carries the post-translational modification 4-aspartylphosphate. The CheB-type methylesterase domain maps to 147–336; it reads TASRQRLVAI…APRLLEIFPK (190 aa). Catalysis depends on residues Ser159, His186, and Asp279.

This sequence belongs to the CheB family. Phosphorylated by CheA. Phosphorylation of the N-terminal regulatory domain activates the methylesterase activity.

It localises to the cytoplasm. The catalysed reaction is [protein]-L-glutamate 5-O-methyl ester + H2O = L-glutamyl-[protein] + methanol + H(+). It carries out the reaction L-glutaminyl-[protein] + H2O = L-glutamyl-[protein] + NH4(+). Involved in chemotaxis. Part of a chemotaxis signal transduction system that modulates chemotaxis in response to various stimuli. Catalyzes the demethylation of specific methylglutamate residues introduced into the chemoreceptors (methyl-accepting chemotaxis proteins or MCP) by CheR. Also mediates the irreversible deamidation of specific glutamine residues to glutamic acid. In Pseudomonas fluorescens (strain Pf0-1), this protein is Protein-glutamate methylesterase/protein-glutamine glutaminase 1.